The chain runs to 417 residues: Imidazolonepropionase (417 aa).

2 residues coordinate Fe(3+): H77 and H79. Zn(2+) is bound by residues H77 and H79. The 4-imidazolone-5-propanoate site is built by R86, Y149, and H182. Y149 lines the N-formimidoyl-L-glutamate pocket. Fe(3+) is bound at residue H247. H247 contributes to the Zn(2+) binding site. Residue Q250 participates in 4-imidazolone-5-propanoate binding. Position 322 (D322) interacts with Fe(3+). D322 is a binding site for Zn(2+). Residues N324 and G326 each coordinate N-formimidoyl-L-glutamate. T327 provides a ligand contact to 4-imidazolone-5-propanoate.

The protein belongs to the metallo-dependent hydrolases superfamily. HutI family. It depends on Zn(2+) as a cofactor. Fe(3+) serves as cofactor.

It localises to the cytoplasm. The enzyme catalyses 4-imidazolone-5-propanoate + H2O = N-formimidoyl-L-glutamate. It functions in the pathway amino-acid degradation; L-histidine degradation into L-glutamate; N-formimidoyl-L-glutamate from L-histidine: step 3/3. Functionally, catalyzes the hydrolytic cleavage of the carbon-nitrogen bond in imidazolone-5-propanoate to yield N-formimidoyl-L-glutamate. It is the third step in the universal histidine degradation pathway. This Cupriavidus necator (strain ATCC 17699 / DSM 428 / KCTC 22496 / NCIMB 10442 / H16 / Stanier 337) (Ralstonia eutropha) protein is Imidazolonepropionase.